The sequence spans 402 residues: Flavohemoprotein (402 aa).

Residues 1 to 136 (MLSAKTIEIV…IADAFISIEA (136 aa)) enclose the Globin domain. His-85 provides a ligand contact to heme b. Catalysis depends on charge relay system residues Tyr-95 and Glu-135. The segment at 147-402 (GGWKDFRNFV…EFFGPATSLQ (256 aa)) is reductase. Residues 150–260 (KDFRNFVIVK…SAPAGDFVLN (111 aa)) form the FAD-binding FR-type domain. Residues Tyr-188 and 204 to 207 (RQYS) each bind FAD. An NADP(+)-binding site is contributed by 273 to 278 (GVGITP). 394–397 (FFGP) serves as a coordination point for FAD.

Belongs to the globin family. Two-domain flavohemoproteins subfamily. The protein in the C-terminal section; belongs to the flavoprotein pyridine nucleotide cytochrome reductase family. Heme b serves as cofactor. The cofactor is FAD.

The catalysed reaction is 2 nitric oxide + NADPH + 2 O2 = 2 nitrate + NADP(+) + H(+). The enzyme catalyses 2 nitric oxide + NADH + 2 O2 = 2 nitrate + NAD(+) + H(+). In terms of biological role, is involved in NO detoxification in an aerobic process, termed nitric oxide dioxygenase (NOD) reaction that utilizes O(2) and NAD(P)H to convert NO to nitrate, which protects the bacterium from various noxious nitrogen compounds. Therefore, plays a central role in the inducible response to nitrosative stress. This is Flavohemoprotein from Bacillus cereus (strain ATCC 14579 / DSM 31 / CCUG 7414 / JCM 2152 / NBRC 15305 / NCIMB 9373 / NCTC 2599 / NRRL B-3711).